We begin with the raw amino-acid sequence, 157 residues long: Probable succinate transporter subunit YjjB (157 aa).

5 helical membrane passes run 8 to 28 (LALM…AMVF), 34 to 54 (ALPW…LMMS), 55 to 75 (AGFN…SIGI), 87 to 107 (VFTV…TAMI), and 129 to 149 (FLKA…PGLW).

It belongs to the ThrE exporter (TC 2.A.79) family. As to quaternary structure, the transporter is composed of YjjB and YjjP.

The protein resides in the cell inner membrane. Involved in succinate export with YjjP. Both proteins are required for export. In Salmonella typhi, this protein is Probable succinate transporter subunit YjjB.